A 555-amino-acid polypeptide reads, in one-letter code: Neurofilament light polypeptide (555 aa).

N-acetylserine is present on Ser-2. The interval 2-93 is head; sequence SSFSYEPYYS…KSIRTQEKAQ (92 aa). Arg-23 carries the asymmetric dimethylarginine; alternate modification. The residue at position 23 (Arg-23) is an Omega-N-methylarginine; alternate. An Omega-N-methylarginine modification is found at Arg-30. Tyr-43 carries the post-translational modification Phosphotyrosine. Phosphoserine is present on residues Ser-56, Ser-67, and Ser-103. The 312-residue stretch at 90-401 folds into the IF rod domain; it reads EKAQLQDLND…KLLEGEETRL (312 aa). Residues 94-125 form a coil 1A region; the sequence is LQDLNDRFASFIERVHELEQQNKVLEAELLVL. A linker 1 region spans residues 126-138; it reads RQKHSEPSRFRAL. A coil 1B region spans residues 139-234; it reads YEQEIRDLRL…KVHEEEIAEL (96 aa). The linker 12 stretch occupies residues 235–253; that stretch reads QAQIQYAQISVEMDVSSKP. Positions 254–272 are coil 2A; it reads DLSAALKDIRAQYEKLAAK. Residues 273–281 form a linker 2 region; it reads NMQNAEEWF. The segment at 282 to 397 is coil 2B; the sequence is KSRFTVLTES…AAYRKLLEGE (116 aa). The tail, subdomain A stretch occupies residues 398 to 444; that stretch reads ETRLSFTSVGSLTTGYTQSSQVFGRSAYGGLQTSSYLMSARSFPSYY. Residues 398–555 are tail; that stretch reads ETRLSFTSVG…GEEQATKKKD (158 aa). Positions 445–555 are tail, subdomain B (acidic); that stretch reads TSHVQEEQIE…GEEQATKKKD (111 aa). Residues 463–555 are disordered; it reads KAEEAKDEPP…GEEQATKKKD (93 aa). Over residues 472–540 the composition is skewed to acidic residues; it reads PSEGEAEEEE…ETKEAEEEEK (69 aa). A Phosphoserine modification is found at Ser-473. A Phosphothreonine modification is found at Thr-532. Residues 541-555 show a composition bias toward basic and acidic residues; sequence KDEGAGEEQATKKKD.

The protein belongs to the intermediate filament family. In terms of assembly, forms homodimers (in vitro). Forms heterodimers with NEFH or NEFM; which can further hetero-oligomerize (in vitro). Forms heterodimers with INA (in vitro). Interacts with ARHGEF28. Interacts with TRIM2. O-glycosylated. In terms of processing, phosphorylated in the head and rod regions by the PKC kinase PKN1, leading to the inhibition of polymerization. Post-translationally, ubiquitinated in the presence of TRIM2 and UBE2D1.

It is found in the cell projection. The protein localises to the axon. The protein resides in the cytoplasm. Its subcellular location is the cytoskeleton. Its function is as follows. Neurofilaments usually contain three intermediate filament proteins: NEFL, NEFM, and NEFH which are involved in the maintenance of neuronal caliber. May additionally cooperate with the neuronal intermediate filament proteins PRPH and INA to form neuronal filamentous networks. The sequence is that of Neurofilament light polypeptide (NEFL) from Bos taurus (Bovine).